The following is a 213-amino-acid chain: Holliday junction branch migration complex subunit RuvA (213 aa).

Residues 1 to 63 (MIGMLTGRVA…EDAFKLYGFL (63 aa)) form a domain I region. A domain II region spans residues 64-142 (DDIDRAWFVH…PTGRSFSIGL (79 aa)). Positions 143 to 160 (PVHSDDGTTGGAPVAPAG) are flexible linker. A domain III region spans residues 161-213 (GDSLAREDAVSALVNLGYNESQARQAVAKILRDADSEAPLGDVIRLSLKELAA).

Belongs to the RuvA family. As to quaternary structure, homotetramer. Forms an RuvA(8)-RuvB(12)-Holliday junction (HJ) complex. HJ DNA is sandwiched between 2 RuvA tetramers; dsDNA enters through RuvA and exits via RuvB. An RuvB hexamer assembles on each DNA strand where it exits the tetramer. Each RuvB hexamer is contacted by two RuvA subunits (via domain III) on 2 adjacent RuvB subunits; this complex drives branch migration. In the full resolvosome a probable DNA-RuvA(4)-RuvB(12)-RuvC(2) complex forms which resolves the HJ.

The protein resides in the cytoplasm. Its function is as follows. The RuvA-RuvB-RuvC complex processes Holliday junction (HJ) DNA during genetic recombination and DNA repair, while the RuvA-RuvB complex plays an important role in the rescue of blocked DNA replication forks via replication fork reversal (RFR). RuvA specifically binds to HJ cruciform DNA, conferring on it an open structure. The RuvB hexamer acts as an ATP-dependent pump, pulling dsDNA into and through the RuvAB complex. HJ branch migration allows RuvC to scan DNA until it finds its consensus sequence, where it cleaves and resolves the cruciform DNA. The sequence is that of Holliday junction branch migration complex subunit RuvA from Maricaulis maris (strain MCS10) (Caulobacter maris).